The primary structure comprises 148 residues: UPF0178 protein Mlg_1612 (148 aa).

Belongs to the UPF0178 family.

The polypeptide is UPF0178 protein Mlg_1612 (Alkalilimnicola ehrlichii (strain ATCC BAA-1101 / DSM 17681 / MLHE-1)).